The chain runs to 209 residues: Thymidine kinase (209 aa).

ATP is bound by residues alanine 9–serine 16 and aspartate 88–glutamine 91. The active-site Proton acceptor is glutamate 89. Zn(2+)-binding residues include cysteine 146, cysteine 148, cysteine 183, and histidine 186.

It belongs to the thymidine kinase family. In terms of assembly, homotetramer.

It localises to the cytoplasm. It catalyses the reaction thymidine + ATP = dTMP + ADP + H(+). The protein is Thymidine kinase of Legionella pneumophila subsp. pneumophila (strain Philadelphia 1 / ATCC 33152 / DSM 7513).